The sequence spans 344 residues: N-acetyl-gamma-glutamyl-phosphate reductase (344 aa).

Residue Cys149 is part of the active site.

This sequence belongs to the NAGSA dehydrogenase family. Type 1 subfamily.

Its subcellular location is the cytoplasm. The catalysed reaction is N-acetyl-L-glutamate 5-semialdehyde + phosphate + NADP(+) = N-acetyl-L-glutamyl 5-phosphate + NADPH + H(+). The protein operates within amino-acid biosynthesis; L-arginine biosynthesis; N(2)-acetyl-L-ornithine from L-glutamate: step 3/4. Functionally, catalyzes the NADPH-dependent reduction of N-acetyl-5-glutamyl phosphate to yield N-acetyl-L-glutamate 5-semialdehyde. This is N-acetyl-gamma-glutamyl-phosphate reductase from Syntrophobacter fumaroxidans (strain DSM 10017 / MPOB).